The following is a 74-amino-acid chain: Protein krueppel (74 aa).

4 C2H2-type zinc fingers span residues 1–4, 10–32, 38–60, and 66–74; these read ERTH, FECP…MRLH, YHCS…LRVH, and YACELCDAR.

The protein belongs to the krueppel C2H2-type zinc-finger protein family.

The protein localises to the nucleus. Its function is as follows. Krueppel is a gap class segmentation protein. This Psychoda cinerea (Psychod fly) protein is Protein krueppel (Kr).